The sequence spans 236 residues: Small ribosomal subunit protein uS2c (236 aa).

The protein belongs to the universal ribosomal protein uS2 family.

The protein resides in the plastid. It is found in the chloroplast. This chain is Small ribosomal subunit protein uS2c (rps2), found in Draba nemorosa (Woodland whitlowgrass).